The sequence spans 292 residues: 2-(5''-triphosphoribosyl)-3'-dephosphocoenzyme-A synthase (292 aa).

It belongs to the CitG/MdcB family.

The catalysed reaction is 3'-dephospho-CoA + ATP = 2'-(5''-triphospho-alpha-D-ribosyl)-3'-dephospho-CoA + adenine. Catalyzes the formation of 2-(5''-triphosphoribosyl)-3'-dephosphocoenzyme-A, the precursor of the prosthetic group of the holo-acyl carrier protein (gamma chain) of citrate lyase, from ATP and dephospho-CoA. This chain is 2-(5''-triphosphoribosyl)-3'-dephosphocoenzyme-A synthase, found in Escherichia coli O139:H28 (strain E24377A / ETEC).